A 376-amino-acid polypeptide reads, in one-letter code: DNA-directed RNA polymerase subunit alpha (376 aa).

The interval 1–259 is alpha N-terminal domain (alpha-NTD); sequence MSDNSQNLLY…KHFSIFEKMD (259 aa). Positions 276–376 are alpha C-terminal domain (alpha-CTD); sequence KDDILHKLVL…EKIRSKNVKG (101 aa).

This sequence belongs to the RNA polymerase alpha chain family. In terms of assembly, homodimer. The RNAP catalytic core consists of 2 alpha, 1 beta, 1 beta' and 1 omega subunit. When a sigma factor is associated with the core the holoenzyme is formed, which can initiate transcription.

The enzyme catalyses RNA(n) + a ribonucleoside 5'-triphosphate = RNA(n+1) + diphosphate. Its function is as follows. DNA-dependent RNA polymerase catalyzes the transcription of DNA into RNA using the four ribonucleoside triphosphates as substrates. This is DNA-directed RNA polymerase subunit alpha from Chlamydia felis (strain Fe/C-56) (Chlamydophila felis).